Consider the following 253-residue polypeptide: Sugar fermentation stimulation protein homolog (253 aa).

The protein belongs to the SfsA family.

The sequence is that of Sugar fermentation stimulation protein homolog from Prochlorococcus marinus (strain NATL1A).